Reading from the N-terminus, the 553-residue chain is Putative transport protein YidE (553 aa).

5 helical membrane-spanning segments follow: residues 4 to 24, 28 to 48, 65 to 85, 95 to 115, and 158 to 178; these read IALTVSILALVAVVGLFIGNV, GVGLGIGGVLFGGIIVGHFVS, FGLILFVYTIGIQVGPGFFAS, LFAVLIVIIGGLVTAILHKLF, and MSYAMAYPFGICGILFTMWML. RCK C-terminal domains follow at residues 191 to 276 and 279 to 361; these read QQHE…VIGQ and DTSL…VLGN. The next 6 helical transmembrane spans lie at 371-391, 393-413, 439-459, 464-484, 493-513, and 533-553; these read MLPVFIGIGLGVLLGSIPVFV, GFPAALKLGLAGGPLIMALIL, IVLFLSVVGLKSGGDFIHTLV, LSWIGYGALITAVPLITVGIL, YLTMCGMLAGSMTDPPALAFA, and LVMFLRIITPQLLAVLFWSIG.

The protein belongs to the AAE transporter (TC 2.A.81) family. YidE subfamily.

The protein resides in the cell membrane. The polypeptide is Putative transport protein YidE (Escherichia coli O6:H1 (strain CFT073 / ATCC 700928 / UPEC)).